Reading from the N-terminus, the 20-residue chain is ELPVNFYALNLTADNINIGY.

The protein resides in the secreted. Its subcellular location is the cell wall. This is 35 kDa cell wall protein from Phaseolus vulgaris (Kidney bean).